A 361-amino-acid chain; its full sequence is Phosphoserine aminotransferase (361 aa).

R42 contributes to the L-glutamate binding site. Pyridoxal 5'-phosphate-binding positions include 76–77 (AT), W102, T152, D172, and Q195. Residue K196 is modified to N6-(pyridoxal phosphate)lysine. 237–238 (NT) is a binding site for pyridoxal 5'-phosphate.

The protein belongs to the class-V pyridoxal-phosphate-dependent aminotransferase family. SerC subfamily. As to quaternary structure, homodimer. The cofactor is pyridoxal 5'-phosphate.

The protein resides in the cytoplasm. The catalysed reaction is O-phospho-L-serine + 2-oxoglutarate = 3-phosphooxypyruvate + L-glutamate. It carries out the reaction 4-(phosphooxy)-L-threonine + 2-oxoglutarate = (R)-3-hydroxy-2-oxo-4-phosphooxybutanoate + L-glutamate. It functions in the pathway amino-acid biosynthesis; L-serine biosynthesis; L-serine from 3-phospho-D-glycerate: step 2/3. The protein operates within cofactor biosynthesis; pyridoxine 5'-phosphate biosynthesis; pyridoxine 5'-phosphate from D-erythrose 4-phosphate: step 3/5. Its function is as follows. Catalyzes the reversible conversion of 3-phosphohydroxypyruvate to phosphoserine and of 3-hydroxy-2-oxo-4-phosphonooxybutanoate to phosphohydroxythreonine. This is Phosphoserine aminotransferase from Xanthomonas axonopodis pv. citri (strain 306).